The chain runs to 104 residues: Signal recognition particle 19 kDa protein (104 aa).

The protein belongs to the SRP19 family. In terms of assembly, part of the signal recognition particle protein translocation system, which is composed of SRP and FtsY. Archaeal SRP consists of a 7S RNA molecule of 300 nucleotides and two protein subunits: SRP54 and SRP19.

The protein localises to the cytoplasm. In terms of biological role, involved in targeting and insertion of nascent membrane proteins into the cytoplasmic membrane. Binds directly to 7S RNA and mediates binding of the 54 kDa subunit of the SRP. This is Signal recognition particle 19 kDa protein from Archaeoglobus fulgidus (strain ATCC 49558 / DSM 4304 / JCM 9628 / NBRC 100126 / VC-16).